The sequence spans 237 residues: Ribosomal RNA small subunit methyltransferase G (237 aa).

Residues G78, F83, A129–E130, and R148 each bind S-adenosyl-L-methionine.

This sequence belongs to the methyltransferase superfamily. RNA methyltransferase RsmG family.

The protein localises to the cytoplasm. In terms of biological role, specifically methylates the N7 position of a guanine in 16S rRNA. This is Ribosomal RNA small subunit methyltransferase G from Streptococcus pyogenes serotype M18 (strain MGAS8232).